The primary structure comprises 303 residues: Uridylate-specific endoribonuclease C (303 aa).

The first 16 residues, 1-16 (MVYLVFLCLLPSLISG), serve as a signal peptide directing secretion. Residues 32 to 303 (TDAEIQSLAE…KRFVASSYPI (272 aa)) enclose the EndoU domain. Residues His-181, His-196, and Lys-239 contribute to the active site. An N-linked (GlcNAc...) asparagine glycan is attached at Asn-287.

Belongs to the ENDOU family. Monomer. Requires Mn(2+) as cofactor.

It is found in the secreted. It catalyses the reaction ribonucleotidyl-uridine-RNA = a 5'-end dephospho-uridine-RNA + a 3'-end 2',3'-cyclophospho-ribonucleotide-RNA. Its function is as follows. Endoribonuclease that cleaves single-stranded RNAs at 5' of uridylates and releases a product with a 2',3'-cyclic phosphate at the 3'-end. The chain is Uridylate-specific endoribonuclease C (endou-c) from Xenopus laevis (African clawed frog).